The primary structure comprises 560 residues: Dihydroxy-acid dehydratase (560 aa).

C52 contributes to the [2Fe-2S] cluster binding site. Residue D84 coordinates Mg(2+). Position 125 (C125) interacts with [2Fe-2S] cluster. Mg(2+)-binding residues include D126 and K127. K127 is subject to N6-carboxylysine. [2Fe-2S] cluster is bound at residue C197. E448 contacts Mg(2+). S474 serves as the catalytic Proton acceptor.

Belongs to the IlvD/Edd family. In terms of assembly, homodimer. [2Fe-2S] cluster is required as a cofactor. Mg(2+) serves as cofactor.

The enzyme catalyses (2R)-2,3-dihydroxy-3-methylbutanoate = 3-methyl-2-oxobutanoate + H2O. It carries out the reaction (2R,3R)-2,3-dihydroxy-3-methylpentanoate = (S)-3-methyl-2-oxopentanoate + H2O. It participates in amino-acid biosynthesis; L-isoleucine biosynthesis; L-isoleucine from 2-oxobutanoate: step 3/4. Its pathway is amino-acid biosynthesis; L-valine biosynthesis; L-valine from pyruvate: step 3/4. Functionally, functions in the biosynthesis of branched-chain amino acids. Catalyzes the dehydration of (2R,3R)-2,3-dihydroxy-3-methylpentanoate (2,3-dihydroxy-3-methylvalerate) into 2-oxo-3-methylpentanoate (2-oxo-3-methylvalerate) and of (2R)-2,3-dihydroxy-3-methylbutanoate (2,3-dihydroxyisovalerate) into 2-oxo-3-methylbutanoate (2-oxoisovalerate), the penultimate precursor to L-isoleucine and L-valine, respectively. In Francisella tularensis subsp. tularensis (strain WY96-3418), this protein is Dihydroxy-acid dehydratase.